The sequence spans 79 residues: uncharacterized protein (79 aa).

This is an uncharacterized protein from Acidianus two-tailed virus (ATV).